Reading from the N-terminus, the 42-residue chain is Aspartate-semialdehyde dehydrogenase leader peptide (42 aa).

In Streptococcus mutans serotype c (strain ATCC 700610 / UA159), this protein is Aspartate-semialdehyde dehydrogenase leader peptide.